Consider the following 641-residue polypeptide: Pumilio homolog 24 (641 aa).

Residues 1-82 are disordered; it reads MSSKGLKPQK…LTEARKKKRK (82 aa). Residues 9-404 enclose the PUM-HD domain; it reads QKSTKRKDTD…RPLLQLLHPN (396 aa). Basic and acidic residues-rich tracts occupy residues 14 to 27 and 67 to 76; these read RKDTDSSAKFDSLK and RVQAKELTEA. Pumilio repeat units lie at residues 118–153, 154–189, 190–225, 303–340, and 341–378; these read KMKGKVPEIAVSHVSSRVLQTCVKFCSQAEKDVLFT, ELQPQFLNLASNKYAVHFIQKMLDGASKQQLAACIS, SLRGHVAPLLRHVFGSLVVEHAYHLGSAAQKQELLA, QLLTGSLLLRMVHTRDGSRLAMLSIKHGSAKERKKIIK, and AMKEHVKKMAFDQFGSMVLACIFSIVDDTKLVTKIIVR. Residues 427 to 468 form a disordered region; sequence MDKSETSSKTKDTDGNEIGEETKDEQEDTVAEHSDHEENVTA. Residues 428-440 show a composition bias toward basic and acidic residues; that stretch reads DKSETSSKTKDTD. A compositionally biased stretch (acidic residues) spans 441–455; it reads GNEIGEETKDEQEDT. Over residues 456-468 the composition is skewed to basic and acidic residues; sequence VAEHSDHEENVTA.

The protein resides in the nucleus. Its subcellular location is the nucleolus. Its function is as follows. Sequence-specific RNA-binding protein that regulates translation and mRNA stability by binding the 3'-UTR of target mRNAs. The sequence is that of Pumilio homolog 24 (APUM24) from Arabidopsis thaliana (Mouse-ear cress).